The primary structure comprises 266 residues: Ribosomal RNA small subunit methyltransferase A (266 aa).

S-adenosyl-L-methionine is bound by residues asparagine 12, leucine 14, glycine 39, glutamate 61, aspartate 87, and asparagine 107.

It belongs to the class I-like SAM-binding methyltransferase superfamily. rRNA adenine N(6)-methyltransferase family. RsmA subfamily.

Its subcellular location is the cytoplasm. The enzyme catalyses adenosine(1518)/adenosine(1519) in 16S rRNA + 4 S-adenosyl-L-methionine = N(6)-dimethyladenosine(1518)/N(6)-dimethyladenosine(1519) in 16S rRNA + 4 S-adenosyl-L-homocysteine + 4 H(+). In terms of biological role, specifically dimethylates two adjacent adenosines (A1518 and A1519) in the loop of a conserved hairpin near the 3'-end of 16S rRNA in the 30S particle. May play a critical role in biogenesis of 30S subunits. The protein is Ribosomal RNA small subunit methyltransferase A of Nitratidesulfovibrio vulgaris (strain ATCC 29579 / DSM 644 / CCUG 34227 / NCIMB 8303 / VKM B-1760 / Hildenborough) (Desulfovibrio vulgaris).